The primary structure comprises 484 residues: Ribosome biogenesis protein YTM1 (484 aa).

The interval valine 11–arginine 94 is ubiquitin-like (UBL) domain. 7 WD repeats span residues serine 121–serine 160, glycine 166–serine 204, glycine 215–alanine 254, valine 289–threonine 329, threonine 331–serine 372, glycine 378–glycine 418, and glycine 448–serine 484.

The protein belongs to the WD repeat WDR12/YTM1 family. Component of the NOP7 complex, composed of ERB1, NOP7 and YTM1. The complex is held together by ERB1, which interacts with NOP7 via its N-terminal domain and with YTM1 via a high-affinity interaction between the seven-bladed beta-propeller domains of the 2 proteins. The NOP7 complex associates with the 66S pre-ribosome. Interacts (via UBL domain) with MDN1 (via VWFA/MIDAS domain).

The protein resides in the nucleus. It is found in the nucleolus. The protein localises to the nucleoplasm. Component of the NOP7 complex, which is required for maturation of the 25S and 5.8S ribosomal RNAs and formation of the 60S ribosome. This Pyricularia oryzae (strain 70-15 / ATCC MYA-4617 / FGSC 8958) (Rice blast fungus) protein is Ribosome biogenesis protein YTM1.